Here is a 286-residue protein sequence, read N- to C-terminus: Shikimate dehydrogenase (NADP(+)) (286 aa).

Shikimate-binding positions include 20-22 and T65; that span reads SLS. Residue K69 is the Proton acceptor of the active site. D81 lines the NADP(+) pocket. Shikimate is bound by residues N90 and D105. NADP(+) contacts are provided by residues 128–132 and T217; that span reads GAGGA. Residue Y219 participates in shikimate binding. Position 240 (G240) interacts with NADP(+).

Belongs to the shikimate dehydrogenase family. As to quaternary structure, homodimer.

The enzyme catalyses shikimate + NADP(+) = 3-dehydroshikimate + NADPH + H(+). Its pathway is metabolic intermediate biosynthesis; chorismate biosynthesis; chorismate from D-erythrose 4-phosphate and phosphoenolpyruvate: step 4/7. In terms of biological role, involved in the biosynthesis of the chorismate, which leads to the biosynthesis of aromatic amino acids. Catalyzes the reversible NADPH linked reduction of 3-dehydroshikimate (DHSA) to yield shikimate (SA). This chain is Shikimate dehydrogenase (NADP(+)), found in Syntrophobacter fumaroxidans (strain DSM 10017 / MPOB).